A 272-amino-acid polypeptide reads, in one-letter code: 1,4-dihydroxy-2-naphthoyl-CoA synthase (272 aa).

Substrate contacts are provided by residues R33, 72 to 76, Y84, 116 to 120, T142, S148, Y245, and K260; these read SGGDQ and YAIGG. Residue 141–143 coordinates hydrogencarbonate; sequence QTG.

The protein belongs to the enoyl-CoA hydratase/isomerase family. MenB subfamily. It depends on hydrogencarbonate as a cofactor.

The catalysed reaction is 2-succinylbenzoyl-CoA + H(+) = 1,4-dihydroxy-2-naphthoyl-CoA + H2O. It functions in the pathway quinol/quinone metabolism; 1,4-dihydroxy-2-naphthoate biosynthesis; 1,4-dihydroxy-2-naphthoate from chorismate: step 6/7. It participates in quinol/quinone metabolism; menaquinone biosynthesis. Its function is as follows. Converts o-succinylbenzoyl-CoA (OSB-CoA) to 1,4-dihydroxy-2-naphthoyl-CoA (DHNA-CoA). The chain is 1,4-dihydroxy-2-naphthoyl-CoA synthase from Staphylococcus epidermidis (strain ATCC 12228 / FDA PCI 1200).